A 433-amino-acid polypeptide reads, in one-letter code: Divergent protein kinase domain 2B (433 aa).

An N-terminal signal peptide occupies residues 1–29 (MEPRLGPKAAALHLGWPFLLLWVSGLSYS). The N-linked (GlcNAc...) asparagine glycan is linked to Asn-100.

It belongs to the DIPK family.

It localises to the secreted. This Bos taurus (Bovine) protein is Divergent protein kinase domain 2B (DIPK2B).